The primary structure comprises 471 residues: Glutamate--tRNA ligase (471 aa).

The 'HIGH' region signature appears at 9 to 19 (PSPTGYLHVGG). Residues C98, C100, C125, and H127 each coordinate Zn(2+). The 'KMSKS' region motif lies at 237-241 (KLSKR). An ATP-binding site is contributed by K240.

This sequence belongs to the class-I aminoacyl-tRNA synthetase family. Glutamate--tRNA ligase type 1 subfamily. Monomer. Zn(2+) is required as a cofactor.

It is found in the cytoplasm. The enzyme catalyses tRNA(Glu) + L-glutamate + ATP = L-glutamyl-tRNA(Glu) + AMP + diphosphate. In terms of biological role, catalyzes the attachment of glutamate to tRNA(Glu) in a two-step reaction: glutamate is first activated by ATP to form Glu-AMP and then transferred to the acceptor end of tRNA(Glu). The protein is Glutamate--tRNA ligase of Salmonella gallinarum (strain 287/91 / NCTC 13346).